Consider the following 180-residue polypeptide: NADH-quinone oxidoreductase subunit I (180 aa).

4Fe-4S ferredoxin-type domains lie at 48-80 (IVLT…LQKA) and 90-119 (EFFR…LTPD). Residues Cys-60, Cys-63, Cys-66, Cys-70, Cys-99, Cys-102, Cys-105, and Cys-109 each coordinate [4Fe-4S] cluster.

This sequence belongs to the complex I 23 kDa subunit family. NDH-1 is composed of 13 different subunits. Subunits NuoA, H, J, K, L, M, N constitute the membrane sector of the complex. [4Fe-4S] cluster serves as cofactor.

The protein localises to the cell inner membrane. The enzyme catalyses a quinone + NADH + 5 H(+)(in) = a quinol + NAD(+) + 4 H(+)(out). In terms of biological role, NDH-1 shuttles electrons from NADH, via FMN and iron-sulfur (Fe-S) centers, to quinones in the respiratory chain. The immediate electron acceptor for the enzyme in this species is believed to be ubiquinone. Couples the redox reaction to proton translocation (for every two electrons transferred, four hydrogen ions are translocated across the cytoplasmic membrane), and thus conserves the redox energy in a proton gradient. The protein is NADH-quinone oxidoreductase subunit I of Erwinia tasmaniensis (strain DSM 17950 / CFBP 7177 / CIP 109463 / NCPPB 4357 / Et1/99).